A 110-amino-acid polypeptide reads, in one-letter code: Parvalbumin alpha (110 aa).

Residue serine 2 is modified to N-acetylserine. Residues serine 2 and serine 24 each carry the phosphoserine modification. EF-hand domains lie at 39 to 74 (KSPEDVKKVFHILDKDKSGFIEEEELGFILKGFSPD) and 78 to 110 (LSVKETKTLLAAGDKDGDGKIGADEFSTLVAES). Residues aspartate 52, aspartate 54, serine 56, phenylalanine 58, glutamate 60, glutamate 63, aspartate 91, aspartate 93, aspartate 95, lysine 97, and glutamate 102 each coordinate Ca(2+).

It belongs to the parvalbumin family.

Functionally, in muscle, parvalbumin is thought to be involved in relaxation after contraction. It binds two calcium ions. The polypeptide is Parvalbumin alpha (PVALB) (Bos taurus (Bovine)).